The primary structure comprises 141 residues: Nucleoside diphosphate kinase (141 aa).

Positions 11, 59, 87, 93, 104, and 114 each coordinate ATP. His-117 (pros-phosphohistidine intermediate) is an active-site residue.

Belongs to the NDK family. Homotetramer. Mg(2+) is required as a cofactor.

It is found in the cytoplasm. The catalysed reaction is a 2'-deoxyribonucleoside 5'-diphosphate + ATP = a 2'-deoxyribonucleoside 5'-triphosphate + ADP. The enzyme catalyses a ribonucleoside 5'-diphosphate + ATP = a ribonucleoside 5'-triphosphate + ADP. Major role in the synthesis of nucleoside triphosphates other than ATP. The ATP gamma phosphate is transferred to the NDP beta phosphate via a ping-pong mechanism, using a phosphorylated active-site intermediate. This Nitrosomonas eutropha (strain DSM 101675 / C91 / Nm57) protein is Nucleoside diphosphate kinase.